The chain runs to 65 residues: Large ribosomal subunit protein bL35 (65 aa).

Belongs to the bacterial ribosomal protein bL35 family.

In Heliobacterium modesticaldum (strain ATCC 51547 / Ice1), this protein is Large ribosomal subunit protein bL35.